The primary structure comprises 514 residues: uncharacterized protein (514 aa).

The span at 1–15 shows a compositional bias: low complexity; sequence MSSPRGASSMSSRSP. The segment at 1-22 is disordered; that stretch reads MSSPRGASSMSSRSPVNLEPES.

This is an uncharacterized protein from Ictaluridae (bullhead catfishes).